We begin with the raw amino-acid sequence, 459 residues long: Mitochondrial distribution and morphology protein 10 (459 aa).

It belongs to the MDM10 family. In terms of assembly, component of the ER-mitochondria encounter structure (ERMES) or MDM complex, composed of mmm1, mdm10, mdm12 and mdm34. Associates with the mitochondrial outer membrane sorting assembly machinery SAM(core) complex.

Its subcellular location is the mitochondrion outer membrane. Its function is as follows. Component of the ERMES/MDM complex, which serves as a molecular tether to connect the endoplasmic reticulum and mitochondria. Components of this complex are involved in the control of mitochondrial shape and protein biogenesis and may function in phospholipid exchange. mdm10 is involved in the late assembly steps of the general translocase of the mitochondrial outer membrane (TOM complex). Functions in the tom40-specific route of the assembly of outer membrane beta-barrel proteins, including the association of tom40 with the receptor tom22 and small TOM proteins. Can associate with the SAM(core) complex as well as the mdm12-mmm1 complex, both involved in late steps of the major beta-barrel assembly pathway, that is responsible for biogenesis of all outer membrane beta-barrel proteins. May act as a switch that shuttles between both complexes and channels precursor proteins into the tom40-specific pathway. Plays a role in mitochondrial morphology and in the inheritance of mitochondria. The sequence is that of Mitochondrial distribution and morphology protein 10 (mdmB) from Aspergillus terreus (strain NIH 2624 / FGSC A1156).